The following is a 380-amino-acid chain: Geranylgeranyl pyrophosphate synthase cle6 (380 aa).

Residues 1–19 are compositionally biased toward low complexity; the sequence is MHSVRTSTTSTSSMVSSTM. Residues 1–55 form a disordered region; sequence MHSVRTSTTSTSSMVSSTMHPFDAFNAPQPYQQHHPPRWNIHNPHFSQTNGHSIQ. Residues 45–55 show a composition bias toward polar residues; it reads HFSQTNGHSIQ. Positions 102, 105, and 134 each coordinate isopentenyl diphosphate. Positions 141 and 145 each coordinate Mg(2+). Arg-150 contacts dimethylallyl diphosphate. Position 151 (Arg-151) interacts with isopentenyl diphosphate. Dimethylallyl diphosphate is bound by residues Lys-229, Thr-230, and Gln-263. Asp-266 is a Mg(2+) binding site. Dimethylallyl diphosphate-binding residues include Asn-270, Lys-280, and Lys-290.

It belongs to the FPP/GGPP synthase family. Mg(2+) serves as cofactor.

It catalyses the reaction isopentenyl diphosphate + dimethylallyl diphosphate = (2E)-geranyl diphosphate + diphosphate. It carries out the reaction isopentenyl diphosphate + (2E)-geranyl diphosphate = (2E,6E)-farnesyl diphosphate + diphosphate. The enzyme catalyses isopentenyl diphosphate + (2E,6E)-farnesyl diphosphate = (2E,6E,10E)-geranylgeranyl diphosphate + diphosphate. It functions in the pathway secondary metabolite biosynthesis; terpenoid biosynthesis. Its function is as follows. Geranylgeranyl pyrophosphate synthase; part of the cluster A that mediates the biosynthesis of chevalone E and its oxidized derivatives that possess a unique five-membered lactone ring and can synergistically enhance the cytotoxicity of doxorubicin (DOX) in breast cancer cells. Within the pathway, cle6 takes part to the biosynthesis of the molecular scaffold by providing geranylgeranyl pyrophosphate (GGPP) to the prenyltransferase cle5 for C-3 geranylgeranylation of triacetic acid lactone. The molecular scaffold is commonly biosynthesized by a series of enzymes including the non-reducing polyketide synthase (NR-PKS) cle1 that produces the alpha-pyrone triacetic acid lactone (TAL); The membrane-bound prenyltransferase cle5 that accepts TAL as its substrate to perform a C-3 geranylgeranylation reaction, in which the pathway-dedicated GGPS cle6 is required to provide GGPP, the other substrate of cle5; the FAD-dependent monooxygenase Cle3 that forms an (S)-epoxide ring at the terminal olefin of the geranylgeranyl group; and the terpene cyclase Cle7 that catalyzes the cyclization of the prenyl group that yields the pentacyclic pathway intermediate chevalone E. Chevalone E can derivatize into seven new oxidized analogs by the cytochrome P450 monooxygenases cle2 (acting at C-20) and cle4 (acting at C-11 and C-12). The sequence is that of Geranylgeranyl pyrophosphate synthase cle6 from Aspergillus versicolor.